Consider the following 89-residue polypeptide: Small ribosomal subunit protein bS16 (89 aa).

Belongs to the bacterial ribosomal protein bS16 family.

This is Small ribosomal subunit protein bS16 from Anaplasma marginale (strain Florida).